A 456-amino-acid polypeptide reads, in one-letter code: Bifunctional protein GlmU (456 aa).

The pyrophosphorylase stretch occupies residues 1–229 (MLNNAMSVVI…LSEVEGVNNR (229 aa)). UDP-N-acetyl-alpha-D-glucosamine-binding positions include 11–14 (LAAG), K25, Q76, 81–82 (GT), 103–105 (YGD), G140, E154, N169, and N227. A Mg(2+)-binding site is contributed by D105. N227 serves as a coordination point for Mg(2+). The segment at 230-250 (LQLSRLERVYQSEQAEKLLLA) is linker. Residues 251–456 (GVMLRDPARF…EGWRRPVKKK (206 aa)) form an N-acetyltransferase region. UDP-N-acetyl-alpha-D-glucosamine-binding residues include R333 and K351. Catalysis depends on H363, which acts as the Proton acceptor. UDP-N-acetyl-alpha-D-glucosamine is bound by residues Y366 and N377. Residues A380, 386-387 (NY), S405, A423, and R440 each bind acetyl-CoA.

The protein in the N-terminal section; belongs to the N-acetylglucosamine-1-phosphate uridyltransferase family. This sequence in the C-terminal section; belongs to the transferase hexapeptide repeat family. In terms of assembly, homotrimer. Mg(2+) serves as cofactor.

Its subcellular location is the cytoplasm. It carries out the reaction alpha-D-glucosamine 1-phosphate + acetyl-CoA = N-acetyl-alpha-D-glucosamine 1-phosphate + CoA + H(+). The enzyme catalyses N-acetyl-alpha-D-glucosamine 1-phosphate + UTP + H(+) = UDP-N-acetyl-alpha-D-glucosamine + diphosphate. Its pathway is nucleotide-sugar biosynthesis; UDP-N-acetyl-alpha-D-glucosamine biosynthesis; N-acetyl-alpha-D-glucosamine 1-phosphate from alpha-D-glucosamine 6-phosphate (route II): step 2/2. It functions in the pathway nucleotide-sugar biosynthesis; UDP-N-acetyl-alpha-D-glucosamine biosynthesis; UDP-N-acetyl-alpha-D-glucosamine from N-acetyl-alpha-D-glucosamine 1-phosphate: step 1/1. The protein operates within bacterial outer membrane biogenesis; LPS lipid A biosynthesis. Functionally, catalyzes the last two sequential reactions in the de novo biosynthetic pathway for UDP-N-acetylglucosamine (UDP-GlcNAc). The C-terminal domain catalyzes the transfer of acetyl group from acetyl coenzyme A to glucosamine-1-phosphate (GlcN-1-P) to produce N-acetylglucosamine-1-phosphate (GlcNAc-1-P), which is converted into UDP-GlcNAc by the transfer of uridine 5-monophosphate (from uridine 5-triphosphate), a reaction catalyzed by the N-terminal domain. This Escherichia coli (strain 55989 / EAEC) protein is Bifunctional protein GlmU.